A 330-amino-acid chain; its full sequence is Alpha-1,6-glucosyltransferase (330 aa).

This sequence belongs to the glycosyltransferase group 1 family. It depends on Does not require a metal cofactor. as a cofactor.

Its subcellular location is the cytoplasm. Its pathway is protein modification; protein glycosylation. Its function is as follows. Catalyzes the transfer of a glucose moiety from UDP-glucose to another glucose that is N-linked to an asparagine within a peptide or protein. Can act in a repetitive manner, and this way it elongates the N-linked glucose by a glycan chain consisting of several alpha-1-&gt;6 linked glucose residues. Is able to add up to six glucose units in vitro. Cannot use UDP-Gal, UDP-GlcNAc or UDP-GalNAc as a substrate donor. In Actinobacillus pleuropneumoniae serotype 7 (strain AP76), this protein is Alpha-1,6-glucosyltransferase.